Here is a 747-residue protein sequence, read N- to C-terminus: Photosystem I P700 chlorophyll a apoprotein A2 (747 aa).

The next 8 helical transmembrane spans lie at 46-69 (LFAT…FHIA), 135-158 (LFQG…LHLQ), 175-199 (LNHH…HVAI), 273-291 (IAHH…GHMY), 341-364 (LHFQ…QHMG), 380-406 (SALY…IFFV), 428-450 (ALIS…IYVH), and 530-548 (FLVH…LILI). Positions 572 and 581 each coordinate [4Fe-4S] cluster. 2 helical membrane-spanning segments follow: residues 588-609 (ATYL…YWHW) and 656-678 (LSPW…MFLI). Divinyl chlorophyll a contacts are provided by His667, Met675, and Tyr683. Trp684 lines the phylloquinone pocket. The chain crosses the membrane as a helical span at residues 720 to 740 (LVGLTHFTVGNFVTFGAFVIA).

Belongs to the PsaA/PsaB family. As to quaternary structure, the PsaA/B heterodimer binds the P700 divinyl chlorophyll special pair and subsequent electron acceptors. PSI consists of a core antenna complex that captures photons, and an electron transfer chain that converts photonic excitation into a charge separation. The cyanobacterial PSI reaction center is composed of one copy each of PsaA,B,C,D,E,F,I,J,K,L,M and X, and forms trimeric complexes. The cofactor is PSI electron transfer chain: 5 divinyl chlorophyll a, 1 divinyl chlorophyll a', 2 phylloquinones and 3 4Fe-4S clusters. PSI core antenna: 90 divinyl chlorophyll a, 22 carotenoids, 3 phospholipids and 1 galactolipid. P700 is a divinyl chlorophyll a/divinyl chlorophyll a' dimer, A0 is one or more divinyl chlorophyll a, A1 is one or both phylloquinones and FX is a shared 4Fe-4S iron-sulfur center..

It is found in the cellular thylakoid membrane. The catalysed reaction is reduced [plastocyanin] + hnu + oxidized [2Fe-2S]-[ferredoxin] = oxidized [plastocyanin] + reduced [2Fe-2S]-[ferredoxin]. Functionally, psaA and PsaB bind P700, the primary electron donor of photosystem I (PSI), as well as the electron acceptors A0, A1 and FX. PSI is a plastocyanin/cytochrome c6-ferredoxin oxidoreductase, converting photonic excitation into a charge separation, which transfers an electron from the donor P700 chlorophyll pair to the spectroscopically characterized acceptors A0, A1, FX, FA and FB in turn. Oxidized P700 is reduced on the lumenal side of the thylakoid membrane by plastocyanin or cytochrome c6. The polypeptide is Photosystem I P700 chlorophyll a apoprotein A2 (Prochlorococcus marinus (strain SARG / CCMP1375 / SS120)).